A 415-amino-acid polypeptide reads, in one-letter code: Probable peptidoglycan glycosyltransferase FtsW (415 aa).

11 helical membrane-spanning segments follow: residues 31–51 (PILM…VTSA), 63–83 (FFFV…TVWL), 97–117 (LWIL…GIGH), 133–153 (IQVS…YIAT), 162–182 (ITGM…LLLQ), 185–205 (FGTT…ARAQ), 206–226 (WQMM…VVLS), 245–265 (FGHG…GVWG), 285–305 (FIFA…LIGL), 326–346 (IAGA…ALIN), and 361–381 (LPLM…LGFL).

This sequence belongs to the SEDS family. FtsW subfamily.

It is found in the cell inner membrane. It carries out the reaction [GlcNAc-(1-&gt;4)-Mur2Ac(oyl-L-Ala-gamma-D-Glu-L-Lys-D-Ala-D-Ala)](n)-di-trans,octa-cis-undecaprenyl diphosphate + beta-D-GlcNAc-(1-&gt;4)-Mur2Ac(oyl-L-Ala-gamma-D-Glu-L-Lys-D-Ala-D-Ala)-di-trans,octa-cis-undecaprenyl diphosphate = [GlcNAc-(1-&gt;4)-Mur2Ac(oyl-L-Ala-gamma-D-Glu-L-Lys-D-Ala-D-Ala)](n+1)-di-trans,octa-cis-undecaprenyl diphosphate + di-trans,octa-cis-undecaprenyl diphosphate + H(+). The protein operates within cell wall biogenesis; peptidoglycan biosynthesis. In terms of biological role, peptidoglycan polymerase that is essential for cell division. This Halothiobacillus neapolitanus (strain ATCC 23641 / c2) (Thiobacillus neapolitanus) protein is Probable peptidoglycan glycosyltransferase FtsW.